The sequence spans 30 residues: Sperm protamine P5 (30 aa).

Residues 1-30 (YRRRRRRGRRGRRRRGRRRRSRGRRRAHGG) form a disordered region.

In terms of tissue distribution, testis.

The protein localises to the nucleus. It is found in the chromosome. Protamines substitute for histones in the chromatin of sperm during the haploid phase of spermatogenesis. They compact sperm DNA into a highly condensed, stable and inactive complex. This chain is Sperm protamine P5, found in Octopus vulgaris (Common octopus).